The primary structure comprises 417 residues: Gamma-glutamyl phosphate reductase (417 aa).

The protein belongs to the gamma-glutamyl phosphate reductase family.

The protein localises to the cytoplasm. It catalyses the reaction L-glutamate 5-semialdehyde + phosphate + NADP(+) = L-glutamyl 5-phosphate + NADPH + H(+). It functions in the pathway amino-acid biosynthesis; L-proline biosynthesis; L-glutamate 5-semialdehyde from L-glutamate: step 2/2. Catalyzes the NADPH-dependent reduction of L-glutamate 5-phosphate into L-glutamate 5-semialdehyde and phosphate. The product spontaneously undergoes cyclization to form 1-pyrroline-5-carboxylate. The sequence is that of Gamma-glutamyl phosphate reductase from Sodalis glossinidius (strain morsitans).